A 383-amino-acid polypeptide reads, in one-letter code: tRNA-specific 2-thiouridylase MnmA (383 aa).

Residues 16 to 23 (AMSGGVDS) and Leu42 each bind ATP. Residue Cys110 is the Nucleophile of the active site. Cys110 and Cys209 are oxidised to a cystine. Gly134 is an ATP binding site. The interval 159-161 (KDQ) is interaction with tRNA. Cys209 (cysteine persulfide intermediate) is an active-site residue.

Belongs to the MnmA/TRMU family.

The protein resides in the cytoplasm. It carries out the reaction S-sulfanyl-L-cysteinyl-[protein] + uridine(34) in tRNA + AH2 + ATP = 2-thiouridine(34) in tRNA + L-cysteinyl-[protein] + A + AMP + diphosphate + H(+). Its function is as follows. Catalyzes the 2-thiolation of uridine at the wobble position (U34) of tRNA, leading to the formation of s(2)U34. The chain is tRNA-specific 2-thiouridylase MnmA from Caulobacter vibrioides (strain ATCC 19089 / CIP 103742 / CB 15) (Caulobacter crescentus).